Consider the following 261-residue polypeptide: Cytochrome c oxidase subunit 3 (261 aa).

Residues 1–15 (MTHQTHAYHMVNPSP) are Mitochondrial matrix-facing. A helical transmembrane segment spans residues 16-34 (WPLTGALSALLMTSGLTMW). At 35 to 40 (FHFNSM) the chain is on the mitochondrial intermembrane side. The helical transmembrane segment at 41 to 66 (TLLTLGLTTNMLTMYQWWRDIIREST) threads the bilayer. Topologically, residues 67–72 (FQGHHT) are mitochondrial matrix. A helical membrane pass occupies residues 73-105 (PNVQKGLRYGMILFIISEVLFFTGFFWAFYHSS). Residues 106-128 (LAPTPELGGCWPPTGIHPLNPLE) are Mitochondrial intermembrane-facing. The chain crosses the membrane as a helical span at residues 129–152 (VPLLNTSVLLASGVSITWAHHSLM). At 153–155 (EGN) the chain is on the mitochondrial matrix side. Residues 156–183 (RNHMLQALFITISLGVYFTLLQASEYYE) form a helical membrane-spanning segment. Residues 184–190 (APFTISD) are Mitochondrial intermembrane-facing. Residues 191–223 (GVYGSTFFVATGFHGLHVIIGSTFLIVCFFRQL) form a helical membrane-spanning segment. Over 224–232 (KFHFTSNHH) the chain is Mitochondrial matrix. Residues 233 to 256 (FGFEAAAWYWHFVDVVWLFLYVSI) traverse the membrane as a helical segment. At 257 to 261 (YWWGS) the chain is on the mitochondrial intermembrane side.

The protein belongs to the cytochrome c oxidase subunit 3 family. Component of the cytochrome c oxidase (complex IV, CIV), a multisubunit enzyme composed of 14 subunits. The complex is composed of a catalytic core of 3 subunits MT-CO1, MT-CO2 and MT-CO3, encoded in the mitochondrial DNA, and 11 supernumerary subunits COX4I, COX5A, COX5B, COX6A, COX6B, COX6C, COX7A, COX7B, COX7C, COX8 and NDUFA4, which are encoded in the nuclear genome. The complex exists as a monomer or a dimer and forms supercomplexes (SCs) in the inner mitochondrial membrane with NADH-ubiquinone oxidoreductase (complex I, CI) and ubiquinol-cytochrome c oxidoreductase (cytochrome b-c1 complex, complex III, CIII), resulting in different assemblies (supercomplex SCI(1)III(2)IV(1) and megacomplex MCI(2)III(2)IV(2)).

It localises to the mitochondrion inner membrane. It catalyses the reaction 4 Fe(II)-[cytochrome c] + O2 + 8 H(+)(in) = 4 Fe(III)-[cytochrome c] + 2 H2O + 4 H(+)(out). Its function is as follows. Component of the cytochrome c oxidase, the last enzyme in the mitochondrial electron transport chain which drives oxidative phosphorylation. The respiratory chain contains 3 multisubunit complexes succinate dehydrogenase (complex II, CII), ubiquinol-cytochrome c oxidoreductase (cytochrome b-c1 complex, complex III, CIII) and cytochrome c oxidase (complex IV, CIV), that cooperate to transfer electrons derived from NADH and succinate to molecular oxygen, creating an electrochemical gradient over the inner membrane that drives transmembrane transport and the ATP synthase. Cytochrome c oxidase is the component of the respiratory chain that catalyzes the reduction of oxygen to water. Electrons originating from reduced cytochrome c in the intermembrane space (IMS) are transferred via the dinuclear copper A center (CU(A)) of subunit 2 and heme A of subunit 1 to the active site in subunit 1, a binuclear center (BNC) formed by heme A3 and copper B (CU(B)). The BNC reduces molecular oxygen to 2 water molecules using 4 electrons from cytochrome c in the IMS and 4 protons from the mitochondrial matrix. The sequence is that of Cytochrome c oxidase subunit 3 (MT-CO3) from Antidorcas marsupialis (Springbok).